The following is an 865-amino-acid chain: Probable beta-glucosidase J (865 aa).

Residue Asp-233 is part of the active site. Residues Asn-330, Asn-447, Asn-503, and Asn-764 are each glycosylated (N-linked (GlcNAc...) asparagine). Positions 411–579 (TGQPGYTFRV…DTDTAIQQAV (169 aa)) constitute a PA14 domain.

This sequence belongs to the glycosyl hydrolase 3 family.

Its subcellular location is the secreted. The catalysed reaction is Hydrolysis of terminal, non-reducing beta-D-glucosyl residues with release of beta-D-glucose.. Its pathway is glycan metabolism; cellulose degradation. Its function is as follows. Beta-glucosidases are one of a number of cellulolytic enzymes involved in the degradation of cellulosic biomass. Catalyzes the last step releasing glucose from the inhibitory cellobiose. The chain is Probable beta-glucosidase J (bglJ) from Aspergillus fumigatus (strain CBS 144.89 / FGSC A1163 / CEA10) (Neosartorya fumigata).